The primary structure comprises 193 residues: Large ribosomal subunit protein bL25 (193 aa).

Belongs to the bacterial ribosomal protein bL25 family. CTC subfamily. In terms of assembly, part of the 50S ribosomal subunit; part of the 5S rRNA/L5/L18/L25 subcomplex. Contacts the 5S rRNA. Binds to the 5S rRNA independently of L5 and L18.

This is one of the proteins that binds to the 5S RNA in the ribosome where it forms part of the central protuberance. In Clostridium tetani (strain Massachusetts / E88), this protein is Large ribosomal subunit protein bL25.